A 45-amino-acid polypeptide reads, in one-letter code: AAGELTLTQLESLREVCEANLACEDMMDAQGIIAAYTAYYGPIPY.

The region spanning 1–41 is the Gla domain; that stretch reads AAGELTLTQLESLREVCEANLACEDMMDAQGIIAAYTAYYG. The Ca(2+) site is built by glutamate 11, glutamate 15, glutamate 18, and glutamate 24. Residues glutamate 11, glutamate 15, and glutamate 18 each carry the 4-carboxyglutamate modification. Cysteine 17 and cysteine 23 are joined by a disulfide.

It belongs to the osteocalcin/matrix Gla protein family. Gamma-carboxyglutamate residues are formed by vitamin K dependent carboxylation by GGCX. These residues are essential for the binding of calcium. As to expression, also found in smaller quantities in dentin.

Its subcellular location is the secreted. Functionally, the carboxylated form is one of the main organic components of the bone matrix, which constitutes 1-2% of the total bone protein. The carboxylated form binds strongly to apatite and calcium. The sequence is that of Osteocalcin (bglap) from Lepomis macrochirus (Bluegill).